We begin with the raw amino-acid sequence, 88 residues long: UPF0367 protein Tery_1229 (88 aa).

This sequence belongs to the UPF0367 family.

This chain is UPF0367 protein Tery_1229, found in Trichodesmium erythraeum (strain IMS101).